A 202-amino-acid chain; its full sequence is MPPANPHLNHTGGCTKTEEEEAASSEEDSGSFHGSGVCKWFNVRMGFGFLSMTHREGICLDSPVDVFVHQSKLHMEGFRSLKEGEAVEFTFKRSSKGLESLQVTGPGGAPCVGSEKKPKGTQKRRSKGDRCFNCGGPNHHAKECQLPPQPKKCHFCQSISHMVANCPIKAQQLSPGSQGKSTTSTGEEEDMSHTPLLPESTD.

Disordered stretches follow at residues 1–33 (MPPANPHLNHTGGCTKTEEEEAASSEEDSGSFH) and 100–128 (SLQVTGPGGAPCVGSEKKPKGTQKRRSKG). The span at 18-29 (EEEEAASSEEDS) shows a compositional bias: acidic residues. The CSD domain maps to 33–106 (HGSGVCKWFN…GLESLQVTGP (74 aa)). Positions 107 to 130 (GGAPCVGSEKKPKGTQKRRSKGDR) are flexible linker. CCHC-type zinc fingers lie at residues 129–146 (DRCFNCGGPNHHAKECQL) and 151–168 (KKCHFCQSISHMVANCPI). Residues Cys131, Cys134, His139, Cys144, Cys153, Cys156, His161, and Cys166 each contribute to the Zn(2+) site. The tract at residues 170–202 (AQQLSPGSQGKSTTSTGEEEDMSHTPLLPESTD) is disordered. The span at 171 to 185 (QQLSPGSQGKSTTST) shows a compositional bias: polar residues. Ser174 is subject to Phosphoserine.

The protein belongs to the lin-28 family. As to quaternary structure, monomer.

The protein localises to the cytoplasm. It is found in the rough endoplasmic reticulum. It localises to the P-body. The protein resides in the stress granule. Its subcellular location is the nucleus. The protein localises to the nucleolus. Its function is as follows. RNA-binding protein that inhibits processing of pre-let-7 miRNAs and regulates translation of mRNAs that control developmental timing, pluripotency and metabolism. Seems to recognize a common structural G-quartet (G4) feature in its miRNA and mRNA targets. 'Translational enhancer' that drives specific mRNAs to polysomes and increases the efficiency of protein synthesis. Its association with the translational machinery and target mRNAs results in an increased number of initiation events per molecule of mRNA and, indirectly, in mRNA stabilization. Suppressor of microRNA (miRNA) biogenesis, including that of let-7. Binds specific target miRNA precursors (pre-miRNAs), recognizing an 5'-GGAG-3' motif found in their terminal loop, and recruits uridylyltransferase. This results in the terminal uridylation of target pre-miRNAs. Uridylated pre-miRNAs fail to be processed by Dicer and undergo degradation. Localized to the periendoplasmic reticulum area, binds to a large number of spliced mRNAs and inhibits the translation of mRNAs destined for the ER, reducing the synthesis of transmembrane proteins, ER or Golgi lumen proteins, and secretory proteins. Binds to and enhances the translation of mRNAs for several metabolic enzymes, increasing glycolysis and oxidative phosphorylation. Which, with the let-7 repression may enhance tissue repair in adult tissue. The polypeptide is Protein lin-28 homolog A (lin28a) (Danio rerio (Zebrafish)).